Reading from the N-terminus, the 116-residue chain is Large ribosomal subunit protein bL20c (116 aa).

This sequence belongs to the bacterial ribosomal protein bL20 family.

It localises to the plastid. The protein localises to the chloroplast. In terms of biological role, binds directly to 23S ribosomal RNA and is necessary for the in vitro assembly process of the 50S ribosomal subunit. It is not involved in the protein synthesizing functions of that subunit. The sequence is that of Large ribosomal subunit protein bL20c from Oltmannsiellopsis viridis (Marine flagellate).